We begin with the raw amino-acid sequence, 208 residues long: Imidazoleglycerol-phosphate dehydratase (208 aa).

The protein belongs to the imidazoleglycerol-phosphate dehydratase family.

It localises to the cytoplasm. It catalyses the reaction D-erythro-1-(imidazol-4-yl)glycerol 3-phosphate = 3-(imidazol-4-yl)-2-oxopropyl phosphate + H2O. It functions in the pathway amino-acid biosynthesis; L-histidine biosynthesis; L-histidine from 5-phospho-alpha-D-ribose 1-diphosphate: step 6/9. The protein is Imidazoleglycerol-phosphate dehydratase of Anaeromyxobacter dehalogenans (strain 2CP-1 / ATCC BAA-258).